The primary structure comprises 1147 residues: ATP-dependent helicase/deoxyribonuclease subunit B (1147 aa).

Residue 8-15 (GRAGSGKS) participates in ATP binding. The [4Fe-4S] cluster site is built by cysteine 786, cysteine 1106, cysteine 1109, and cysteine 1115.

Belongs to the helicase family. AddB/RexB type 1 subfamily. Heterodimer of AddA and AddB. Requires Mg(2+) as cofactor. [4Fe-4S] cluster is required as a cofactor.

In terms of biological role, the heterodimer acts as both an ATP-dependent DNA helicase and an ATP-dependent, dual-direction single-stranded exonuclease. Recognizes the chi site generating a DNA molecule suitable for the initiation of homologous recombination. The AddB subunit has 5' -&gt; 3' nuclease activity but not helicase activity. This chain is ATP-dependent helicase/deoxyribonuclease subunit B, found in Clostridium botulinum (strain Loch Maree / Type A3).